The sequence spans 1247 residues: Probable phosphorylase b kinase regulatory subunit alpha (1247 aa).

Residues 853 to 883 (LKGLYEKACQQKLWGLVRHTAGMLGKRVEDL) are calmodulin-binding. Phosphoserine is present on residues serine 1030 and serine 1033. The segment at 1052-1089 (DRQGQWLRRRRLDGALNRVPRDFYSRVWTVLEKCQGLA) is calmodulin-binding. Residue cysteine 1244 is the site of S-farnesyl cysteine attachment.

It belongs to the phosphorylase b kinase regulatory chain family. In terms of processing, although the final Cys may be farnesylated, the terminal tripeptide is probably not removed, and the C-terminus is not methylated.

The protein localises to the cell membrane. It participates in glycan biosynthesis; glycogen metabolism. Functionally, phosphorylase b kinase catalyzes the phosphorylation of serine in certain substrates, including troponin I. The alpha chain may bind calmodulin. This is Probable phosphorylase b kinase regulatory subunit alpha from Drosophila melanogaster (Fruit fly).